Consider the following 195-residue polypeptide: Ras-related protein Rab-31 (195 aa).

7 residues coordinate GTP: Gly-16, Gly-18, Lys-19, Ser-20, Ser-21, Asp-32, and His-33. Ser-20 provides a ligand contact to Mg(2+). 2 consecutive short sequence motifs (switch) follow at residues 30-42 (HFDH…IGAS) and 63-79 (AGQE…YRGS). Position 36 is a phosphoserine (Ser-36). Positions 38, 64, 119, 122, 150, and 151 each coordinate GTP. Residue Thr-38 participates in Mg(2+) binding. Positions 168 to 195 (PPLGPQENGNSGGIKLGNQSLQASRRCC) are disordered. Over residues 184–195 (GNQSLQASRRCC) the composition is skewed to polar residues. S-geranylgeranyl cysteine attachment occurs at residues Cys-194 and Cys-195.

Belongs to the small GTPase superfamily. Rab family. In terms of assembly, interacts with OCRL. Interacts (in GDP-bound form) with RIN3 and GAPVD1, which function as guanine exchange factors (GEF). Interacts with EGFR. Interacts with NGFR. Interacts (in GTP-bound form) with EEA1. Interacts (in GTP-bound form) with APPL2; interaction contributes to or enhances recruitment of APPL2 to the phagosomes; interaction enhances Fc-gamma receptor-mediated phagocytosis through PI3K/Akt signaling in macrophages. Mg(2+) is required as a cofactor. Detected in brain astrocytes (at protein level).

The protein localises to the early endosome. It localises to the golgi apparatus. Its subcellular location is the trans-Golgi network. The protein resides in the trans-Golgi network membrane. It is found in the cytoplasmic vesicle. The protein localises to the phagosome. It localises to the phagosome membrane. The enzyme catalyses GTP + H2O = GDP + phosphate + H(+). Regulated by guanine nucleotide exchange factors (GEFs) including RIN3 and GAPVD1 which promote the exchange of bound GDP for free GTP. Regulated by GTPase activating proteins (GAPs) which increase the GTP hydrolysis activity. Inhibited by GDP dissociation inhibitors (GDIs) which prevent Rab-GDP dissociation. In terms of biological role, the small GTPases Rab are key regulators of intracellular membrane trafficking, from the formation of transport vesicles to their fusion with membranes. Rabs cycle between an inactive GDP-bound form and an active GTP-bound form that is able to recruit to membranes different set of downstream effectors directly responsible for vesicle formation, movement, tethering and fusion. Required for the integrity and for normal function of the Golgi apparatus and the trans-Golgi network. Plays a role in insulin-stimulated translocation of GLUT4 to the cell membrane. Plays a role in the maturation of phagosomes that engulf pathogens, such as S.aureus and Mycobacterium. Plays a role in M6PR transport from the trans-Golgi network to endosomes. Plays a role in the internalization of EGFR from the cell membrane into endosomes. In Mus musculus (Mouse), this protein is Ras-related protein Rab-31.